The primary structure comprises 388 residues: Mannitol-1-phosphate 5-dehydrogenase (388 aa).

An NAD(+)-binding site is contributed by 5-16 (AIQFGGGNIGRG). The active site involves K213.

This sequence belongs to the mannitol dehydrogenase family. Monomer.

The enzyme catalyses D-mannitol 1-phosphate + NAD(+) = beta-D-fructose 6-phosphate + NADH + H(+). Functionally, catalyzes the NAD(H)-dependent interconversion of D-fructose 6-phosphate and D-mannitol 1-phosphate in the mannitol metabolic pathway. This chain is Mannitol-1-phosphate 5-dehydrogenase (mpdA), found in Aspergillus fumigatus (strain CBS 144.89 / FGSC A1163 / CEA10) (Neosartorya fumigata).